The chain runs to 448 residues: N-succinylarginine dihydrolase (448 aa).

Substrate contacts are provided by residues glycine 19–serine 28, asparagine 110, and histidine 137–arginine 138. Glutamate 174 is a catalytic residue. Substrate is bound at residue arginine 214. The active site involves histidine 250. Substrate contacts are provided by aspartate 252 and asparagine 365. Cysteine 371 (nucleophile) is an active-site residue.

It belongs to the succinylarginine dihydrolase family. As to quaternary structure, homodimer.

It catalyses the reaction N(2)-succinyl-L-arginine + 2 H2O + 2 H(+) = N(2)-succinyl-L-ornithine + 2 NH4(+) + CO2. It functions in the pathway amino-acid degradation; L-arginine degradation via AST pathway; L-glutamate and succinate from L-arginine: step 2/5. Functionally, catalyzes the hydrolysis of N(2)-succinylarginine into N(2)-succinylornithine, ammonia and CO(2). This is N-succinylarginine dihydrolase from Pseudomonas savastanoi pv. phaseolicola (strain 1448A / Race 6) (Pseudomonas syringae pv. phaseolicola (strain 1448A / Race 6)).